Here is a 242-residue protein sequence, read N- to C-terminus: Polycomb group RING finger protein 3 (242 aa).

An RING-type zinc finger spans residues 17 to 56 (CRLCNGYLIDATTVTECLHTFCRSCLVKYLEENNTCPTCR). The disordered stretch occupies residues 120 to 149 (EAHRNGETKTDEHTHKEPPEEKQEEDHDYH).

In terms of assembly, component of a PRC1-like complex.

Its subcellular location is the nucleus. Component of a Polycomb group (PcG) multiprotein PRC1-like complex, a complex class required to maintain the transcriptionally repressive state of many genes, including Hox genes, throughout development. PcG PRC1 complex acts via chromatin remodeling and modification of histones; it mediates monoubiquitination of histone H2A 'Lys-119', rendering chromatin heritably changed in its expressibility. Within the PRC1-like complex, regulates RNF2 ubiquitin ligase activity. In Xenopus tropicalis (Western clawed frog), this protein is Polycomb group RING finger protein 3 (pcgf3).